The following is a 367-amino-acid chain: Flagellar P-ring protein (367 aa).

The first 21 residues, 1–21 (MYVFKALAGIVLALVATLAHA), serve as a signal peptide directing secretion.

Belongs to the FlgI family. As to quaternary structure, the basal body constitutes a major portion of the flagellar organelle and consists of four rings (L,P,S, and M) mounted on a central rod.

Its subcellular location is the periplasm. The protein resides in the bacterial flagellum basal body. Its function is as follows. Assembles around the rod to form the L-ring and probably protects the motor/basal body from shearing forces during rotation. The sequence is that of Flagellar P-ring protein from Salmonella arizonae (strain ATCC BAA-731 / CDC346-86 / RSK2980).